A 203-amino-acid chain; its full sequence is Pro-FMRFamide-related neuropeptide VF (203 aa).

A signal peptide spans 1–26 (MEIISSKRFILLTLATSSFLTSNTLC). Positions 27 to 57 (SDELMMPHFHSKEGYGKYYQLRGIPKGVKER) are excised as a propeptide. Position 94 is a phenylalanine amide (F94). The propeptide occupies 97-106 (NIEDRRSPRA). Residue F125 is modified to Phenylalanine amide. The propeptide occupies 128-203 (TTARRITKTL…QPVLQGAMKL (76 aa)). The interval 161–186 (HQEIQSPGQEQPRKRVFTETDDAERK) is disordered. Positions 171–186 (QPRKRVFTETDDAERK) are enriched in basic and acidic residues.

The protein belongs to the FARP (FMRFamide related peptide) family. As to expression, isoform 1 is expressed at high levels in the hypothalamus and eye. Isoform 2 is specifically expressed in a region between the dorsomedial hypothalamic and ventromedial hypothalamic nuclei.

It is found in the secreted. Its function is as follows. Efficiently inhibits forskolin-induced production of cAMP. Acts as a potent negative regulator of gonadotropin synthesis and secretion. Induces secretion of prolactin. In terms of biological role, efficiently inhibits forskolin-induced production of cAMP. Blocks morphine-induced analgesia. The sequence is that of Pro-FMRFamide-related neuropeptide VF (Npvf) from Rattus norvegicus (Rat).